The following is an 89-amino-acid chain: Small ribosomal subunit protein bS20 (89 aa).

Residues 1–26 (MANIKASKKDALTSEKRRKKNSSRRS) are disordered. The segment covering 16 to 26 (KRRKKNSSRRS) has biased composition (basic residues).

This sequence belongs to the bacterial ribosomal protein bS20 family.

Functionally, binds directly to 16S ribosomal RNA. In Buchnera aphidicola subsp. Acyrthosiphon pisum (strain 5A), this protein is Small ribosomal subunit protein bS20.